Consider the following 458-residue polypeptide: Succinate-semialdehyde dehydrogenase [NADP(+)] 1 (458 aa).

Residues tryptophan 134–asparagine 135, lysine 158–serine 161, and glycine 210–serine 211 each bind NADP(+). Glutamate 232 serves as the catalytic Proton acceptor. An NADP(+)-binding site is contributed by leucine 233. Cysteine 266 (nucleophile) is an active-site residue. NADP(+) is bound at residue glutamate 363.

Belongs to the aldehyde dehydrogenase family.

It catalyses the reaction succinate semialdehyde + NADP(+) + H2O = succinate + NADPH + 2 H(+). Functionally, catalyzes the NADP(+)-dependent oxidation of succinate semialdehyde to succinate. It is believed to be the main source of succinate semialdehyde dehydrogenase activity in Mycobacterium. This chain is Succinate-semialdehyde dehydrogenase [NADP(+)] 1 (gabD1), found in Mycobacterium ulcerans (strain Agy99).